A 221-amino-acid chain; its full sequence is Phosphoribosylformylglycinamidine synthase subunit PurQ (221 aa).

Residues 6-221 form the Glutamine amidotransferase type-1 domain; that stretch reads VGVVVFPGSN…LFTLKSLILK (216 aa). Cys-89 functions as the Nucleophile in the catalytic mechanism. Catalysis depends on residues His-197 and Glu-199.

In terms of assembly, part of the FGAM synthase complex composed of 1 PurL, 1 PurQ and 2 PurS subunits.

It localises to the cytoplasm. The catalysed reaction is N(2)-formyl-N(1)-(5-phospho-beta-D-ribosyl)glycinamide + L-glutamine + ATP + H2O = 2-formamido-N(1)-(5-O-phospho-beta-D-ribosyl)acetamidine + L-glutamate + ADP + phosphate + H(+). The enzyme catalyses L-glutamine + H2O = L-glutamate + NH4(+). The protein operates within purine metabolism; IMP biosynthesis via de novo pathway; 5-amino-1-(5-phospho-D-ribosyl)imidazole from N(2)-formyl-N(1)-(5-phospho-D-ribosyl)glycinamide: step 1/2. Part of the phosphoribosylformylglycinamidine synthase complex involved in the purines biosynthetic pathway. Catalyzes the ATP-dependent conversion of formylglycinamide ribonucleotide (FGAR) and glutamine to yield formylglycinamidine ribonucleotide (FGAM) and glutamate. The FGAM synthase complex is composed of three subunits. PurQ produces an ammonia molecule by converting glutamine to glutamate. PurL transfers the ammonia molecule to FGAR to form FGAM in an ATP-dependent manner. PurS interacts with PurQ and PurL and is thought to assist in the transfer of the ammonia molecule from PurQ to PurL. The protein is Phosphoribosylformylglycinamidine synthase subunit PurQ of Prochlorococcus marinus (strain MIT 9312).